The sequence spans 301 residues: tRNA dimethylallyltransferase (301 aa).

Residue 2-9 participates in ATP binding; the sequence is GPTASGKT. Substrate is bound at residue 4-9; that stretch reads TASGKT. Interaction with substrate tRNA stretches follow at residues 27 to 30 and 151 to 155; these read DSAM and QRIQR.

It belongs to the IPP transferase family. As to quaternary structure, monomer. Mg(2+) is required as a cofactor.

The enzyme catalyses adenosine(37) in tRNA + dimethylallyl diphosphate = N(6)-dimethylallyladenosine(37) in tRNA + diphosphate. In terms of biological role, catalyzes the transfer of a dimethylallyl group onto the adenine at position 37 in tRNAs that read codons beginning with uridine, leading to the formation of N6-(dimethylallyl)adenosine (i(6)A). This chain is tRNA dimethylallyltransferase, found in Coxiella burnetii (strain CbuK_Q154) (Coxiella burnetii (strain Q154)).